A 233-amino-acid polypeptide reads, in one-letter code: Translation initiation factor 6 (233 aa).

Belongs to the eIF-6 family.

Its function is as follows. Binds to the 50S ribosomal subunit and prevents its association with the 30S ribosomal subunit to form the 70S initiation complex. The sequence is that of Translation initiation factor 6 from Aeropyrum pernix (strain ATCC 700893 / DSM 11879 / JCM 9820 / NBRC 100138 / K1).